The sequence spans 475 residues: Zinc-regulated GTPase metalloprotein activator 1 (475 aa).

50 to 57 (GFLGSGKT) is a binding site for GTP. The Zn(2+) site is built by Cys116, Cys118, and Cys119. The short motif at 116 to 119 (CICC) is the CXCC motif element. GTP is bound by residues 119 to 123 (CTMRE) and 229 to 232 (NKCD). The CobW C-terminal domain maps to 302-420 (IKSFIYKARR…LIESELNNCL (119 aa)). Positions 440–467 (IQLDEELEEEELEEEEEEGEYKDEIEMK) form a coiled coil. The span at 445 to 460 (ELEEEELEEEEEEGEY) shows a compositional bias: acidic residues. Residues 445-475 (ELEEEELEEEEEEGEYKDEIEMKVDGSKFKK) form a disordered region. Positions 461 to 475 (KDEIEMKVDGSKFKK) are enriched in basic and acidic residues.

The protein belongs to the SIMIBI class G3E GTPase family. ZNG1 subfamily.

The catalysed reaction is GTP + H2O = GDP + phosphate + H(+). Its function is as follows. Zinc chaperone that directly transfers zinc cofactor to target metalloproteins, thereby activating them. Zinc is transferred from the CXCC motif in the GTPase domain to the zinc binding site in target proteins in a process requiring GTP hydrolysis. The polypeptide is Zinc-regulated GTPase metalloprotein activator 1 (Dictyostelium discoideum (Social amoeba)).